A 166-amino-acid chain; its full sequence is Lipoprotein signal peptidase (166 aa).

The next 4 membrane-spanning stretches (helical) occupy residues 9–29, 37–57, 71–91, and 100–120; these read AGGSLAPWLGVAVIVILFDQL, VFAYGSSHAIAPFFNLVLVYN, WQRWAFTALGVAAAVLICYLL, and FCTALALIMGGAIGNVIDRLL. Active-site residues include D126 and D144. A helical transmembrane segment spans residues 136–156; the sequence is HWPAFNLADSAITIGAALLVF.

It belongs to the peptidase A8 family.

It localises to the cell inner membrane. The enzyme catalyses Release of signal peptides from bacterial membrane prolipoproteins. Hydrolyzes -Xaa-Yaa-Zaa-|-(S,diacylglyceryl)Cys-, in which Xaa is hydrophobic (preferably Leu), and Yaa (Ala or Ser) and Zaa (Gly or Ala) have small, neutral side chains.. Its pathway is protein modification; lipoprotein biosynthesis (signal peptide cleavage). Functionally, this protein specifically catalyzes the removal of signal peptides from prolipoproteins. This is Lipoprotein signal peptidase from Paraburkholderia phymatum (strain DSM 17167 / CIP 108236 / LMG 21445 / STM815) (Burkholderia phymatum).